We begin with the raw amino-acid sequence, 268 residues long: GTP cyclohydrolase III (268 aa).

The protein belongs to the archaeal-type GTP cyclohydrolase family. Homotrimer. Mg(2+) serves as cofactor.

It carries out the reaction GTP + 3 H2O = 2-amino-5-formylamino-6-(5-phospho-D-ribosylamino)pyrimidin-4(3H)-one + 2 phosphate + 2 H(+). Functionally, catalyzes the formation of 2-amino-5-formylamino-6-ribofuranosylamino-4(3H)-pyrimidinone ribonucleotide monophosphate and inorganic phosphate from GTP. Also has an independent pyrophosphate phosphohydrolase activity. The sequence is that of GTP cyclohydrolase III (gch3) from Methanocaldococcus jannaschii (strain ATCC 43067 / DSM 2661 / JAL-1 / JCM 10045 / NBRC 100440) (Methanococcus jannaschii).